The following is a 170-amino-acid chain: Adenine phosphoribosyltransferase (170 aa).

The protein belongs to the purine/pyrimidine phosphoribosyltransferase family. In terms of assembly, homodimer.

It is found in the cytoplasm. It catalyses the reaction AMP + diphosphate = 5-phospho-alpha-D-ribose 1-diphosphate + adenine. It participates in purine metabolism; AMP biosynthesis via salvage pathway; AMP from adenine: step 1/1. Functionally, catalyzes a salvage reaction resulting in the formation of AMP, that is energically less costly than de novo synthesis. This chain is Adenine phosphoribosyltransferase, found in Streptococcus pneumoniae (strain Taiwan19F-14).